A 289-amino-acid chain; its full sequence is MPKTQYIAGVSGGPDSMLLLKLYHKKIACVVHVNYNKRTTALRDQKMVEEYCKQLKVPLIVHTVPEDTVWKKNFQAQARKIRFEQFQKAASLYKVDKLLLAHHRDDFIEQAKMQLDARKRAMYYGIKTRGELYGMKVYRPFIKYWKNEILALCEEHKVPYGIDETNAQPIYKRNQVRQEIANWSKEEKEEFYIGVCAMNRVIGQKLFSLMKRAKQWLAHPDVRELKRYPLPDQRQLVYSFLITHHIDVTGDKIDAILDFIQPFQQKHYRLKDEIFLSIKDERLTLLYKS.

Position 11–16 (11–16 (SGGPDS)) interacts with ATP.

This sequence belongs to the tRNA(Ile)-lysidine synthase family.

Its subcellular location is the cytoplasm. The enzyme catalyses cytidine(34) in tRNA(Ile2) + L-lysine + ATP = lysidine(34) in tRNA(Ile2) + AMP + diphosphate + H(+). Its function is as follows. Ligates lysine onto the cytidine present at position 34 of the AUA codon-specific tRNA(Ile) that contains the anticodon CAU, in an ATP-dependent manner. Cytidine is converted to lysidine, thus changing the amino acid specificity of the tRNA from methionine to isoleucine. The chain is tRNA(Ile)-lysidine synthase from Mycoplasma pneumoniae (strain ATCC 29342 / M129 / Subtype 1) (Mycoplasmoides pneumoniae).